A 335-amino-acid polypeptide reads, in one-letter code: Ubiquinone biosynthesis protein COQ4, mitochondrial (335 aa).

A mitochondrion-targeting transit peptide spans 1–10 (MLRLSLLRST). Residues His210, Asp211, His214, and Glu226 each contribute to the Zn(2+) site.

This sequence belongs to the COQ4 family. As to quaternary structure, component of a multi-subunit COQ enzyme complex, composed of at least COQ3, COQ4, COQ5, COQ6, COQ7 and COQ9. Interacts with COQ3. Requires Zn(2+) as cofactor.

It localises to the mitochondrion inner membrane. The catalysed reaction is 4-hydroxy-3-methoxy-5-(all-trans-hexaprenyl)benzoate + H(+) = 2-methoxy-6-(all-trans-hexaprenyl)phenol + CO2. The protein operates within cofactor biosynthesis; ubiquinone biosynthesis. Lyase that catalyzes the C1-decarboxylation of 4-hydroxy-3-methoxy-5-(all-trans-hexaprenyl)benzoic acid into 2-methoxy-6-(all-trans-hexaprenyl)phenol during ubiquinone biosynthesis. This chain is Ubiquinone biosynthesis protein COQ4, mitochondrial, found in Saccharomyces cerevisiae (strain AWRI1631) (Baker's yeast).